We begin with the raw amino-acid sequence, 200 residues long: High mobility group protein B3 (200 aa).

The residue at position 3 (Lys-3) is an N6-acetyllysine. DNA-binding regions (HMG box) lie at residues 9–79 (PKGK…KDYG) and 93–161 (PKRP…ADYK). Residue Cys-23 is modified to Cysteine sulfonic acid (-SO3H); alternate. Cys-23 and Cys-45 form a disulfide bridge. N6-acetyllysine is present on residues Lys-30 and Lys-43. Cys-45 is subject to Cysteine sulfonic acid (-SO3H); alternate. Positions 71–97 (YDREMKDYGPAKGGKKKKDPNAPKRPP) are disordered. At Ser-98 the chain carries Phosphoserine. Cysteine sulfonic acid (-SO3H) is present on Cys-104. Residues Lys-112 and Lys-139 each carry the N6-acetyllysine modification. The disordered stretch occupies residues 161–200 (KSKGKFDGAKGPAKVARKKVEEEEEEEEEEEEEEEEEEDE). Residues 182-200 (EEEEEEEEEEEEEEEEEDE) show a composition bias toward acidic residues.

The protein belongs to the HMGB family. In terms of processing, reduction/oxidation of cysteine residues Cys-23, Cys-45 and Cys-104 and a possible intramolecular disulfide bond involving Cys-23 and Cys-45 give rise to different redox forms with specific functional activities in various cellular compartments: 1- fully reduced HMGB3 (HMGB3C23hC45hC104h), 2- disulfide HMGB3 (HMGB3C23-C45C104h) and 3- sulfonyl HMGB3 (HMGB3C23soC45soC104so). Expressed in bone marrow cells, specifically in primitive Lin-, c-kit+, Sca-1+, IL-7Ralpha- cells, and Ter119+ erythroid cells.

The protein localises to the nucleus. The protein resides in the chromosome. It localises to the cytoplasm. Its function is as follows. Multifunctional protein with various roles in different cellular compartments. May act in a redox sensitive manner. Associates with chromatin and binds DNA with a preference for non-canonical DNA structures such as single-stranded DNA. Can bend DNA and enhance DNA flexibility by looping thus providing a mechanism to promote activities on various gene promoters. Proposed to be involved in the innate immune response to nucleic acids by acting as a cytoplasmic promiscuous immunogenic DNA/RNA sensor. Negatively regulates B-cell and myeloid cell differentiation. In hematopoietic stem cells may regulate the balance between self-renewal and differentiation. Involved in negative regulation of canonical Wnt signaling. The protein is High mobility group protein B3 (Hmgb3) of Mus musculus (Mouse).